Reading from the N-terminus, the 601-residue chain is Kelch repeat and BTB domain-containing protein 8 (601 aa).

Positions 1–25 (MAASADLSKSSPTPNGIPSSDPASD) are disordered. Residues 7 to 22 (LSKSSPTPNGIPSSDP) show a composition bias toward polar residues. The BTB domain occupies 49-117 (TDIVVEVDHG…AYTSRVILTE (69 aa)). The 100-residue stretch at 153-252 (IGVFIFADHY…PLMEDTFIEK (100 aa)) folds into the BACK domain. 5 Kelch repeats span residues 336-390 (DIYI…YCCG), 391-441 (KMYA…EYKE), 443-481 (IYVL…VYKD), 483-532 (IYYI…LFQN), and 542-588 (QVTV…FECA).

Belongs to the KBTBD8 family. As to quaternary structure, component of the BCR(KBTBD8) E3 ubiquitin ligase complex, at least composed of CUL3, KBTBD8 and RBX1.

The protein localises to the cytoplasm. It is found in the cytoskeleton. It localises to the spindle. The protein resides in the golgi apparatus. Its function is as follows. Substrate-specific adapter of a BCR (BTB-CUL3-RBX1) E3 ubiquitin ligase complex that acts as a regulator of neural crest specification. The BCR(KBTBD8) complex acts by mediating monoubiquitination of NOLC1 and TCOF1: monoubiquitination promotes the formation of a NOLC1-TCOF1 complex that acts as a platform to connect RNA polymerase I with enzymes responsible for ribosomal processing and modification, leading to remodel the translational program of differentiating cells in favor of neural crest specification. The protein is Kelch repeat and BTB domain-containing protein 8 (KBTBD8) of Homo sapiens (Human).